A 488-amino-acid polypeptide reads, in one-letter code: Malonate-semialdehyde dehydrogenase (488 aa).

Positions 150, 152, 176, 179, 180, 229, and 251 each coordinate NAD(+). The active-site Nucleophile is the Cys-284. Position 382 (Glu-382) interacts with NAD(+).

This sequence belongs to the aldehyde dehydrogenase family. IolA subfamily. In terms of assembly, homotetramer.

The catalysed reaction is 3-oxopropanoate + NAD(+) + CoA + H2O = hydrogencarbonate + acetyl-CoA + NADH + H(+). It carries out the reaction 2-methyl-3-oxopropanoate + NAD(+) + CoA + H2O = propanoyl-CoA + hydrogencarbonate + NADH + H(+). The protein operates within polyol metabolism; myo-inositol degradation into acetyl-CoA; acetyl-CoA from myo-inositol: step 7/7. Its function is as follows. Catalyzes the oxidation of malonate semialdehyde (MSA) and methylmalonate semialdehyde (MMSA) into acetyl-CoA and propanoyl-CoA, respectively. Is involved in a myo-inositol catabolic pathway. Bicarbonate, and not CO2, is the end-product of the enzymatic reaction. The chain is Malonate-semialdehyde dehydrogenase from Listeria innocua serovar 6a (strain ATCC BAA-680 / CLIP 11262).